The chain runs to 303 residues: MALTSEQRAEIEAQRSEPQLTSRPTVAAMENLLFTPFEVLDHGFLRVVDYMGDDGAVVQAARVSYGRGTKKVSEDAGLIRYLMRHRHSTPFEMCEIKFHVKLPVFVARQWIRHRMASVNEYSARYSILDREFYLPAMDQVAAQSSSNRQGRSDALDADTAHQVLEILRRDASQCYDDYESLLNPEGRGLARELARINLTLNTYTQWYWKIDLHNLMHFLALRADPHAQYEIRVYAEKMIEILKAWVPATAAAFEEYRLGAFTLSAGMLKVVRRRLAGETVTQENSGLTKREWSEMAAVLDGAS.

The interval 1–21 (MALTSEQRAEIEAQRSEPQLT) is disordered. Residues 43–256 (GFLRVVDYMG…PATAAAFEEY (214 aa)) form the ThyX domain. FAD contacts are provided by residues Thr-89, 112 to 114 (RHR), and Glu-120. Residues 109–112 (QWIR), 120–124 (EYSAR), and Arg-195 contribute to the dUMP site. The short motif at 112-122 (RHRMASVNEYS) is the ThyX motif element. Residues 211–213 (DLH) and His-217 contribute to the FAD site. Arg-222 is a binding site for dUMP. Residue Arg-222 is the Involved in ionization of N3 of dUMP, leading to its activation of the active site.

It belongs to the thymidylate synthase ThyX family. In terms of assembly, homotetramer. Requires FAD as cofactor.

The enzyme catalyses dUMP + (6R)-5,10-methylene-5,6,7,8-tetrahydrofolate + NADPH + H(+) = dTMP + (6S)-5,6,7,8-tetrahydrofolate + NADP(+). It participates in pyrimidine metabolism; dTTP biosynthesis. Catalyzes the reductive methylation of 2'-deoxyuridine-5'-monophosphate (dUMP) to 2'-deoxythymidine-5'-monophosphate (dTMP) while utilizing 5,10-methylenetetrahydrofolate (mTHF) as the methyl donor, and NADPH and FADH(2) as the reductant. This is Flavin-dependent thymidylate synthase from Gluconobacter oxydans (strain 621H) (Gluconobacter suboxydans).